A 389-amino-acid chain; its full sequence is Cytochrome oxidase assembly protein SHY1 (389 aa).

Topologically, residues 1–71 (MSLLGARSTY…SRRERSFGKK (71 aa)) are mitochondrial matrix. Residues 72 to 92 (IVLGLMFAMPIISFYLGTWQV) traverse the membrane as a helical segment. Residues 93-341 (RRLKWKTKLI…KPTIDLKNNH (249 aa)) lie on the Mitochondrial intermembrane side of the membrane. The disordered stretch occupies residues 292–311 (GTQAVDNNTSKPRSRQEMPT). The helical transmembrane segment at 342–362 (LQYLVTWYGLSFLSTIFLIVA) threads the bilayer. Topologically, residues 363-389 (LRKAKRGGVVSQDQLMKEKLKHSRKYM) are mitochondrial matrix.

Belongs to the SURF1 family. As to quaternary structure, interacts with COA1, COX14 and MSS51.

It localises to the mitochondrion inner membrane. In terms of biological role, required for efficient assembly of cytochrome c oxidase in the mitochondrial inner membrane. Involved in a step that couples MSS51-COX14-dependent regulation of COX1 translation to early steps of cytochrome c oxidase assembly. The protein is Cytochrome oxidase assembly protein SHY1 (SHY1) of Saccharomyces cerevisiae (strain ATCC 204508 / S288c) (Baker's yeast).